Consider the following 526-residue polypeptide: Threonine synthase 1, chloroplastic (526 aa).

The N-terminal 40 residues, 1-40 (MASSCLFNASVSSLNPKQDPIRRHRSTSLLRHRPVVISCT), are a transit peptide targeting the chloroplast. S-adenosyl-L-methionine is bound by residues 142 to 144 (PYG), 165 to 167 (SAF), N172, L173, K181, and N187. At K203 the chain carries N6-(pyridoxal phosphate)lysine. Pyridoxal 5'-phosphate is bound by residues 335-339 (GNLGN) and T472.

This sequence belongs to the threonine synthase family. Homodimer. The cofactor is pyridoxal 5'-phosphate.

The protein resides in the plastid. It localises to the chloroplast. It catalyses the reaction O-phospho-L-homoserine + H2O = L-threonine + phosphate. It functions in the pathway amino-acid biosynthesis; L-threonine biosynthesis; L-threonine from L-aspartate: step 5/5. Its activity is regulated as follows. Allosterically activated by S-adenosyl-L-methionine (SAM). Activated by S-adenosyl-L-ethionine, 5'-amino-5'-deoxyadenosine, sinefungin and 5'-deoxy-5-methylthioadenosine. Inhibited by AMP. In terms of biological role, catalyzes the gamma-elimination of phosphate from L-phosphohomoserine and the beta-addition of water to produce L-threonine. This Arabidopsis thaliana (Mouse-ear cress) protein is Threonine synthase 1, chloroplastic (TS1).